Here is a 397-residue protein sequence, read N- to C-terminus: Chorismate synthase (397 aa).

NADP(+) contacts are provided by arginine 40 and arginine 46. Residues 129-131, 257-258, glycine 302, 317-321, and arginine 343 each bind FMN; these read RSS, QA, and KPISS.

It belongs to the chorismate synthase family. In terms of assembly, homotetramer. FMNH2 is required as a cofactor.

It carries out the reaction 5-O-(1-carboxyvinyl)-3-phosphoshikimate = chorismate + phosphate. It functions in the pathway metabolic intermediate biosynthesis; chorismate biosynthesis; chorismate from D-erythrose 4-phosphate and phosphoenolpyruvate: step 7/7. In terms of biological role, catalyzes the anti-1,4-elimination of the C-3 phosphate and the C-6 proR hydrogen from 5-enolpyruvylshikimate-3-phosphate (EPSP) to yield chorismate, which is the branch point compound that serves as the starting substrate for the three terminal pathways of aromatic amino acid biosynthesis. This reaction introduces a second double bond into the aromatic ring system. This Chlorobium limicola (strain DSM 245 / NBRC 103803 / 6330) protein is Chorismate synthase.